The primary structure comprises 274 residues: MRPWLLLLVGLSSFFALSTSVNRAKNSGSDFDLESRASTTNVHSILSKRKLRAFGGDTNTLKDSGKARREEKVWKLFCSVFLQLDDKKKCMFETNQVSSHQPEPRPALSFMPGPKPAHSLVPESKPVRSLMTGNAPVRSIATELKLVLPRITETVKNPSKSQVVMLWLHKVADFSKSEHGVNTMAYRTLYEWLSPSFSDAKLAKFFVGLREDEALRETAEKMLAYMLIKSTSTEAVGRAWLKSGEHPSRLFESMNFKEADFKDTVFLGWLKYAS.

The signal sequence occupies residues 1-20; that stretch reads MRPWLLLLVGLSSFFALSTS. The RxLR-dEER signature appears at 49–72; it reads RKLRAFGGDTNTLKDSGKARREEK.

This sequence belongs to the RxLR effector family.

The protein localises to the secreted. Its subcellular location is the host nucleus. It is found in the host cytoplasm. In terms of biological role, secreted effector that completely suppresses the host cell death induced by cell death-inducing proteins. This is Secreted RxLR effector protein 144 from Plasmopara viticola (Downy mildew of grapevine).